We begin with the raw amino-acid sequence, 388 residues long: Chorismate synthase (388 aa).

Arg-39 and Arg-45 together coordinate NADP(+). Residues 130–132 (RSS), 251–252 (NA), Gly-296, 311–315 (KPIPT), and Arg-337 contribute to the FMN site.

Belongs to the chorismate synthase family. In terms of assembly, homotetramer. FMNH2 serves as cofactor.

It catalyses the reaction 5-O-(1-carboxyvinyl)-3-phosphoshikimate = chorismate + phosphate. The protein operates within metabolic intermediate biosynthesis; chorismate biosynthesis; chorismate from D-erythrose 4-phosphate and phosphoenolpyruvate: step 7/7. Its function is as follows. Catalyzes the anti-1,4-elimination of the C-3 phosphate and the C-6 proR hydrogen from 5-enolpyruvylshikimate-3-phosphate (EPSP) to yield chorismate, which is the branch point compound that serves as the starting substrate for the three terminal pathways of aromatic amino acid biosynthesis. This reaction introduces a second double bond into the aromatic ring system. This is Chorismate synthase from Streptococcus agalactiae serotype Ia (strain ATCC 27591 / A909 / CDC SS700).